A 129-amino-acid chain; its full sequence is MQLPSRGTDWIAPVLRLPRNAGRGLIWLYRHTLSPLVGYNCRHYPTCSMYGDEAIRKFGLWAGGWMTLARLLRCQPWGTSGIDLVPQTAPSRARWYLPWRYARWRGVNAPPPDVAEPCGCGSHSQLTPH.

It belongs to the UPF0161 family.

It localises to the cell inner membrane. Could be involved in insertion of integral membrane proteins into the membrane. In Rhodopseudomonas palustris (strain TIE-1), this protein is Putative membrane protein insertion efficiency factor.